The following is a 145-amino-acid chain: Mini-ribonuclease 3 (145 aa).

D27 is an active-site residue.

This sequence belongs to the MrnC RNase family. Homodimer. Mg(2+) is required as a cofactor.

The protein localises to the cytoplasm. Functionally, involved in correct processing of both the 5' and 3' ends of 23S rRNA precursor. Processes 30S rRNA precursor transcript even in absence of ribonuclease 3 (Rnc); Rnc processes 30S rRNA into smaller rRNA precursors. This Kosmotoga olearia (strain ATCC BAA-1733 / DSM 21960 / TBF 19.5.1) protein is Mini-ribonuclease 3.